A 264-amino-acid chain; its full sequence is Small ribosomal subunit protein uS2 (264 aa).

This sequence belongs to the universal ribosomal protein uS2 family.

This chain is Small ribosomal subunit protein uS2, found in Helicobacter pylori (strain P12).